We begin with the raw amino-acid sequence, 363 residues long: Adenosine deaminase (363 aa).

At Ala2 the chain carries N-acetylalanine. The Zn(2+) site is built by His15 and His17. Residues His17 and Asp19 each contribute to the substrate site. N6-acetyllysine is present on Lys54. Residue Gly184 participates in substrate binding. Zn(2+) is bound at residue His214. The active-site Proton donor is the Glu217. N6-acetyllysine is present on Lys232. Zn(2+) is bound at residue Asp295. Asp296 is a binding site for substrate.

This sequence belongs to the metallo-dependent hydrolases superfamily. Adenosine and AMP deaminases family. As to quaternary structure, interacts with DPP4 (via extracellular domain). Interacts with PLG (via Kringle 4 domain); the interaction stimulates PLG activation when in complex with DPP4. Zn(2+) is required as a cofactor. As to expression, expressed in gastrointestinal tissues (at protein level).

The protein resides in the cell membrane. It is found in the cell junction. It localises to the cytoplasmic vesicle lumen. The protein localises to the cytoplasm. Its subcellular location is the lysosome. The catalysed reaction is adenosine + H2O + H(+) = inosine + NH4(+). The enzyme catalyses 2'-deoxyadenosine + H2O + H(+) = 2'-deoxyinosine + NH4(+). It catalyses the reaction cordycepin + H2O + H(+) = 3'-deoxyinosine + NH4(+). Catalyzes the hydrolytic deamination of adenosine and 2-deoxyadenosine. Plays an important role in purine metabolism and in adenosine homeostasis. Modulates signaling by extracellular adenosine, and so contributes indirectly to cellular signaling events. Acts as a positive regulator of T-cell coactivation, by binding DPP4. Its interaction with DPP4 regulates lymphocyte-epithelial cell adhesion. Enhances dendritic cell immunogenicity by affecting dendritic cell costimulatory molecule expression and cytokines and chemokines secretion. Enhances CD4+ T-cell differentiation and proliferation. Acts as a positive modulator of adenosine receptors ADORA1 and ADORA2A, by enhancing their ligand affinity via conformational change. Stimulates plasminogen activation. Plays a role in male fertility. Plays a protective role in early postimplantation embryonic development. Also responsible for the deamination of cordycepin (3'-deoxyadenosine), a fungal natural product that shows antitumor, antibacterial, antifungal, antivirus, and immune regulation properties. The protein is Adenosine deaminase (ADA) of Bos taurus (Bovine).